The primary structure comprises 351 residues: Tetraacyldisaccharide 4'-kinase (351 aa).

Lys47–Thr54 contributes to the ATP binding site.

It belongs to the LpxK family.

It carries out the reaction a lipid A disaccharide + ATP = a lipid IVA + ADP + H(+). Its pathway is glycolipid biosynthesis; lipid IV(A) biosynthesis; lipid IV(A) from (3R)-3-hydroxytetradecanoyl-[acyl-carrier-protein] and UDP-N-acetyl-alpha-D-glucosamine: step 6/6. Transfers the gamma-phosphate of ATP to the 4'-position of a tetraacyldisaccharide 1-phosphate intermediate (termed DS-1-P) to form tetraacyldisaccharide 1,4'-bis-phosphate (lipid IVA). The polypeptide is Tetraacyldisaccharide 4'-kinase (Cytophaga hutchinsonii (strain ATCC 33406 / DSM 1761 / CIP 103989 / NBRC 15051 / NCIMB 9469 / D465)).